Here is a 121-residue protein sequence, read N- to C-terminus: Small ribosomal subunit protein uS13 (121 aa).

The tract at residues 94-121 is disordered; the sequence is RGLPVRGQSTKNNARTRKGPKRTVGAKR. Positions 107–121 are enriched in basic residues; it reads ARTRKGPKRTVGAKR.

This sequence belongs to the universal ribosomal protein uS13 family. As to quaternary structure, part of the 30S ribosomal subunit. Forms a loose heterodimer with protein S19. Forms two bridges to the 50S subunit in the 70S ribosome.

Functionally, located at the top of the head of the 30S subunit, it contacts several helices of the 16S rRNA. In the 70S ribosome it contacts the 23S rRNA (bridge B1a) and protein L5 of the 50S subunit (bridge B1b), connecting the 2 subunits; these bridges are implicated in subunit movement. Contacts the tRNAs in the A and P-sites. The chain is Small ribosomal subunit protein uS13 from Natranaerobius thermophilus (strain ATCC BAA-1301 / DSM 18059 / JW/NM-WN-LF).